The following is a 217-amino-acid chain: Oxygen-insensitive NAD(P)H nitroreductase (217 aa).

10 to 14 (RYSTK) contacts FMN. Residues Lys-14, Thr-41, Asn-71, Lys-74, and Arg-107 each contribute to the NAD(+) site. Asn-71 contributes to the FMN binding site. Residues 165–166 (EG) and 205–207 (KSR) contribute to the FMN site.

It belongs to the nitroreductase family. Homodimer. FMN serves as cofactor.

Functionally, reduction of a variety of nitroaromatic compounds using NADH (and to lesser extent NADPH) as source of reducing equivalents; two electrons are transferred. Capable of reducing nitrofurazone. In Salmonella typhimurium (strain LT2 / SGSC1412 / ATCC 700720), this protein is Oxygen-insensitive NAD(P)H nitroreductase.